Consider the following 804-residue polypeptide: Endoplasmin (804 aa).

Positions 1-21 (MRALWVLGLCCVLLTFGSVRA) are cleaved as a signal peptide. The short motif at 42–44 (SRT) is the SRT pseudosubstrate motif element. N-linked (GlcNAc...) asparagine glycosylation is present at N62. S64 carries the phosphoserine modification. An N-linked (GlcNAc...) asparagine glycan is attached at N107. 3 residues coordinate ATP: N107, D149, and N162. K168 is subject to N6-(2-hydroxyisobutyryl)lysine. A Phosphoserine modification is found at S172. F199 lines the ATP pocket. N-linked (GlcNAc...) asparagine glycosylation occurs at N217. Residues 288-323 (TVEEPMEEEEAAKEEKEESDDEAAVEEEEEEKKPKT) are disordered. The span at 289–317 (VEEPMEEEEAAKEEKEESDDEAAVEEEEE) shows a compositional bias: acidic residues. A phosphoserine mark is found at S306 and S403. N6-succinyllysine is present on K404. N-linked (GlcNAc...) asparagine glycosylation occurs at N445. A Phosphoserine modification is found at S447. Position 479 is an N6-acetyllysine (K479). Residues N481 and N502 are each glycosylated (N-linked (GlcNAc...) asparagine). The residue at position 633 (K633) is an N6-succinyllysine. The interval 750–804 (DPDAKVEEEPEEEPEETTEDTTEDTEQDDDEEMDAGADEEEQETSETSTAEKDEL) is disordered. Residues 757–793 (EEPEEEPEETTEDTTEDTEQDDDEEMDAGADEEEQET) show a composition bias toward acidic residues. The short motif at 801 to 804 (KDEL) is the Prevents secretion from ER element.

This sequence belongs to the heat shock protein 90 family. Homodimer; disulfide-linked. Component of an EIF2 complex at least composed of CELF1/CUGBP1, CALR, CALR3, EIF2S1, EIF2S2, HSP90B1 and HSPA5. Part of a large chaperone multiprotein complex comprising DNAJB11, HSP90B1, HSPA5, HYOU, PDIA2, PDIA4, PDIA6, PPIB, SDF2L1, UGGT1 and very small amounts of ERP29, but not, or at very low levels, CALR nor CANX. Interacts with AIMP1; regulates its retention in the endoplasmic reticulum. Hyperglycosylated form interacts with OS9; promoting its degradation by the endoplasmic reticulum associated degradation (ERAD). Interacts with CNPY3. This interaction is disrupted in the presence of ATP. Interacts with TLR4 and TLR9, but not with TLR3. Interacts with MZB1 in a calcium-dependent manner. Interacts with METTL23. Interacts with IL1B; the interaction facilitates cargo translocation into the ERGIC. Interacts with EIF2AK3. In terms of processing, phosphorylated by CK2. N-glycosylated cotranslationally at Asn-217 by STT3A-containing OST-A complex: this glycosylation is constitutive. In response to various stress, 5 additional facultative sites (Asn-62, Asn-107, Asn-445, Asn-481 and Asn-502) can be glycosylated post-translationally by STT3B-containing OST-B complex, leading to a hyperglycosylated form that is degraded by the ER-associated degradation (ERAD) pathway. In normal conditions, the OST-A complex together with CCDC134 prevent glycosylation at facultative sites during protein folding, thereby preventing hyperglycosylation. Mechanistically, nascent HSP90B1 is tethered during translation to a specialized CCDC134-containing translocon that forms a microenvironment for its folding, in which STT3A associates with the SRT pseudosubstrate motif, and prevents access to facultative glycosylation sites until folding is completed, rendering its facultative sites inaccessible to the OST-B complex.

Its subcellular location is the endoplasmic reticulum lumen. It localises to the sarcoplasmic reticulum lumen. It is found in the melanosome. It carries out the reaction ATP + H2O = ADP + phosphate + H(+). Functionally, ATP-dependent chaperone involved in the processing of proteins in the endoplasmic reticulum, regulating their transport. Together with MESD, acts as a modulator of the Wnt pathway by promoting the folding of LRP6, a coreceptor of the canonical Wnt pathway. When associated with CNPY3, required for proper folding of Toll-like receptors. Promotes folding and trafficking of TLR4 to the cell surface. May participate in the unfolding of cytosolic leaderless cargos (lacking the secretion signal sequence) such as the interleukin 1/IL-1 to facilitate their translocation into the ERGIC (endoplasmic reticulum-Golgi intermediate compartment) and secretion; the translocation process is mediated by the cargo receptor TMED10. In Sus scrofa (Pig), this protein is Endoplasmin (HSP90B1).